Consider the following 176-residue polypeptide: Peptidyl-prolyl cis-trans isomerase CYP19-3 (176 aa).

Residues 7–170 (FFDILIGKMK…ERVVIEDCGE (164 aa)) form the PPIase cyclophilin-type domain.

This sequence belongs to the cyclophilin-type PPIase family. Ubiquitous, with highest levels in flowers and lowest levels in roots.

Its subcellular location is the cytoplasm. It catalyses the reaction [protein]-peptidylproline (omega=180) = [protein]-peptidylproline (omega=0). Binds cyclosporin A (CsA). CsA mediates some of its effects via an inhibitory action on PPIase. Functionally, PPIases accelerate the folding of proteins. It catalyzes the cis-trans isomerization of proline imidic peptide bonds in oligopeptides. The chain is Peptidyl-prolyl cis-trans isomerase CYP19-3 (CYP19-3) from Arabidopsis thaliana (Mouse-ear cress).